The chain runs to 227 residues: Ribonuclease 3 (227 aa).

An RNase III domain is found at 7–132 (LTAFMDRLGY…VIAAVYLDGG (126 aa)). Glu45 provides a ligand contact to Mg(2+). Asp49 is an active-site residue. Residues Asp118 and Glu121 each contribute to the Mg(2+) site. The active site involves Glu121. One can recognise a DRBM domain in the interval 157–226 (DAKTALQEWA…AKDLLAQLAG (70 aa)).

It belongs to the ribonuclease III family. In terms of assembly, homodimer. Mg(2+) serves as cofactor.

Its subcellular location is the cytoplasm. The enzyme catalyses Endonucleolytic cleavage to 5'-phosphomonoester.. Its function is as follows. Digests double-stranded RNA. Involved in the processing of primary rRNA transcript to yield the immediate precursors to the large and small rRNAs (23S and 16S). Processes some mRNAs, and tRNAs when they are encoded in the rRNA operon. Processes pre-crRNA and tracrRNA of type II CRISPR loci if present in the organism. The sequence is that of Ribonuclease 3 from Jannaschia sp. (strain CCS1).